The sequence spans 291 residues: 4-diphosphocytidyl-2-C-methyl-D-erythritol kinase (291 aa).

Residue Lys19 is part of the active site. 102-112 is a binding site for ATP; that stretch reads PMGGGIGGGSS. The active site involves Asp144.

Belongs to the GHMP kinase family. IspE subfamily.

The catalysed reaction is 4-CDP-2-C-methyl-D-erythritol + ATP = 4-CDP-2-C-methyl-D-erythritol 2-phosphate + ADP + H(+). It participates in isoprenoid biosynthesis; isopentenyl diphosphate biosynthesis via DXP pathway; isopentenyl diphosphate from 1-deoxy-D-xylulose 5-phosphate: step 3/6. Catalyzes the phosphorylation of the position 2 hydroxy group of 4-diphosphocytidyl-2C-methyl-D-erythritol. In Ectopseudomonas mendocina (strain ymp) (Pseudomonas mendocina), this protein is 4-diphosphocytidyl-2-C-methyl-D-erythritol kinase.